A 65-amino-acid polypeptide reads, in one-letter code: Large ribosomal subunit protein bL35 (65 aa).

The interval 1–22 is disordered; sequence MPKIKTVRGAAKRFKKTGKGGF. Over residues 10 to 22 the composition is skewed to basic residues; sequence AAKRFKKTGKGGF.

Belongs to the bacterial ribosomal protein bL35 family.

The sequence is that of Large ribosomal subunit protein bL35 from Klebsiella pneumoniae (strain 342).